The following is a 315-amino-acid chain: Type II restriction enzyme SalI (315 aa).

The catalysed reaction is Endonucleolytic cleavage of DNA to give specific double-stranded fragments with terminal 5'-phosphates.. In terms of biological role, a P subtype restriction enzyme that recognizes the double-stranded sequence 5'-GTCGAC-3' and cleaves after G-1. The protein is Type II restriction enzyme SalI of Streptomyces albus G.